Reading from the N-terminus, the 333-residue chain is Casein kinase II subunit beta-1 (333 aa).

Residues 58–78 are compositionally biased toward acidic residues; it reads VEPEDDDDEEEEDEEDEEDMS. Disordered stretches follow at residues 58 to 92 and 282 to 333; these read VEPE…ERRH and ARRY…ESEL. Over residues 305–316 the composition is skewed to basic residues; the sequence is ASRRRGPPRRQK.

The protein belongs to the casein kinase 2 subunit beta family. In terms of assembly, tetramer composed of two alpha chains, one beta chain and one beta' chain. In terms of processing, phosphorylated by alpha subunit.

In terms of biological role, regulatory subunit of casein kinase II/CK2. As part of the kinase complex regulates the basal catalytic activity of the alpha subunit a constitutively active serine/threonine-protein kinase that phosphorylates a large number of substrates containing acidic residues C-terminal to the phosphorylated serine or threonine. The sequence is that of Casein kinase II subunit beta-1 (ckb-1) from Neurospora crassa (strain ATCC 24698 / 74-OR23-1A / CBS 708.71 / DSM 1257 / FGSC 987).